The primary structure comprises 138 residues: Gas vesicle protein A (138 aa).

Residues 74-138 (EAGPRKDPGL…STSRKKEEQE (65 aa)) are disordered. Low complexity predominate over residues 116–129 (GSSSGSSSGSSSRS).

This sequence belongs to the gas vesicle GvpA family. The gas vesicle shell is 2 nm thick and consists of a single layer of this protein. It forms helical ribs nearly perpendicular to the long axis of the vesicle.

Its subcellular location is the gas vesicle shell. In terms of biological role, gas vesicles are hollow, gas filled proteinaceous nanostructures found in some microorganisms. During planktonic growth they allow positioning of the organism at a favorable depth for light or nutrient acquisition. GvpA forms the protein shell. It is not clear what function gas vesicles perform in soil bacteria. This Streptomyces sp. (strain CB03234) protein is Gas vesicle protein A.